Reading from the N-terminus, the 293-residue chain is Histamine N-methyltransferase B (293 aa).

Glu-28 provides a ligand contact to substrate. The S-adenosyl-L-methionine site is built by Gly-60, Glu-89, Gln-94, Ser-120, and Ile-142. Residue Asn-283 coordinates substrate.

Belongs to the class I-like SAM-binding methyltransferase superfamily. HNMT family. In terms of assembly, monomer.

The protein localises to the cytoplasm. The enzyme catalyses histamine + S-adenosyl-L-methionine = N(tau)-methylhistamine + S-adenosyl-L-homocysteine + H(+). Its function is as follows. Inactivates histamine by N-methylation. Plays an important role in degrading histamine and in regulating the airway response to histamine. This is Histamine N-methyltransferase B (hnmt-b) from Xenopus laevis (African clawed frog).